A 668-amino-acid polypeptide reads, in one-letter code: MAP kinase kinase PBS2 (668 aa).

The segment covering 1-15 (MEDKFANLSLHEKTG) has biased composition (basic and acidic residues). Disordered regions lie at residues 1-43 (MEDK…SSHY), 61-120 (RALK…ASSK), and 181-313 (NPNR…GSSG). Composition is skewed to polar residues over residues 16-43 (KSSIQLNEQTGSDNGSAVKRTSSTSSHY), 68-91 (SVGSNQSEQDKGSSQSPKHIQQIV), and 104-120 (SKVSQRMSSQVVQASSK). At serine 68 the chain carries Phosphoserine. A compositionally biased stretch (low complexity) spans 239-250 (AQQPQQFAPSPS). A Phosphoserine modification is found at serine 269. Over residues 270–300 (NPGSLINGVQSTSTSSSTEGPHDTVGTTPRT) the composition is skewed to polar residues. The span at 301 to 310 (GNSNNSSNSG) shows a compositional bias: low complexity. The 264-residue stretch at 360–623 (LEFLDELGHG…YAALTEHPWL (264 aa)) folds into the Protein kinase domain. Residues 366–374 (LGHGNYGNV) and lysine 389 contribute to the ATP site. The active-site Proton acceptor is aspartate 485. Serine 514 carries the phosphoserine modification. Position 518 is a phosphothreonine (threonine 518).

Belongs to the protein kinase superfamily. STE Ser/Thr protein kinase family. MAP kinase kinase subfamily. As to quaternary structure, interacts with NBP2, PTC1, SHO1 and STE11. Post-translationally, activated by phosphorylation by SSK2 or SSK22. Ser/Thr phosphorylation is also necessary for SHO1-mediated activation.

It is found in the cytoplasm. It catalyses the reaction L-seryl-[protein] + ATP = O-phospho-L-seryl-[protein] + ADP + H(+). The catalysed reaction is L-threonyl-[protein] + ATP = O-phospho-L-threonyl-[protein] + ADP + H(+). The enzyme catalyses L-tyrosyl-[protein] + ATP = O-phospho-L-tyrosyl-[protein] + ADP + H(+). Kinase involved in a signal transduction pathway that is activated by changes in the osmolarity of the extracellular environment. Activates the MAP kinase HOG1 by concomitant phosphorylation at 'Thr-174' and 'Tyr-176'. The polypeptide is MAP kinase kinase PBS2 (PBS2) (Saccharomyces cerevisiae (strain ATCC 204508 / S288c) (Baker's yeast)).